We begin with the raw amino-acid sequence, 293 residues long: uncharacterized protein (293 aa).

The active site involves aspartate 119.

It belongs to the pseudouridine synthase RluA family.

The catalysed reaction is a uridine in RNA = a pseudouridine in RNA. This is an uncharacterized protein from Helicobacter pylori (strain J99 / ATCC 700824) (Campylobacter pylori J99).